The sequence spans 687 residues: Acetyl-coenzyme A synthetase 2 (687 aa).

CoA contacts are provided by residues 206 to 209 and threonine 325; that span reads RGGK. Residues 401–403, 425–430, aspartate 516, and arginine 531 each bind ATP; these read GEP and DTMWQT. CoA is bound at residue serine 539. Arginine 542 contacts ATP. A CoA-binding site is contributed by arginine 617.

Belongs to the ATP-dependent AMP-binding enzyme family.

The catalysed reaction is acetate + ATP + CoA = acetyl-CoA + AMP + diphosphate. This is Acetyl-coenzyme A synthetase 2 (ACS2) from Eremothecium gossypii (strain ATCC 10895 / CBS 109.51 / FGSC 9923 / NRRL Y-1056) (Yeast).